Consider the following 316-residue polypeptide: Apolipoprotein E (316 aa).

Positions Met-1–Ala-18 are cleaved as a signal peptide. 8 tandem repeats follow at residues Ala-83–Gly-104, Pro-105–Gly-126, Ala-127–Gly-148, Gln-149–Leu-170, Arg-171–Ala-192, Arg-193–Thr-214, Leu-215–Arg-232, and Gly-233–Gln-254. The segment at Ala-83–Gln-254 is 8 X 22 AA approximate tandem repeats. An LDL and other lipoprotein receptors binding region spans residues His-161–Arg-171. Leu-165–Arg-168 is a binding site for heparin. The lipid-binding and lipoprotein association stretch occupies residues His-213–Met-289. Ala-228–Leu-235 serves as a coordination point for heparin. The interval Asn-265–Gln-316 is homooligomerization. Residues Arg-277–Met-289 are specificity for association with VLDL.

The protein belongs to the apolipoprotein A1/A4/E family. Homotetramer. May interact with ABCA1; functionally associated with ABCA1 in the biogenesis of HDLs. May interact with APP/A4 amyloid-beta peptide; the interaction is extremely stable in vitro but its physiological significance is unclear. May interact with MAPT. May interact with MAP2. In the cerebrospinal fluid, interacts with secreted SORL1. Interacts with PMEL; this allows the loading of PMEL luminal fragment on ILVs to induce fibril nucleation. Post-translationally, APOE exists as multiple glycosylated and sialylated glycoforms within cells and in plasma. The extent of glycosylation and sialylation are tissue and context specific. Glycated in plasma VLDL. In terms of processing, phosphorylated by FAM20C in the extracellular medium.

The protein localises to the secreted. The protein resides in the extracellular space. Its subcellular location is the extracellular matrix. It localises to the extracellular vesicle. It is found in the endosome. The protein localises to the multivesicular body. Its function is as follows. APOE is an apolipoprotein, a protein associating with lipid particles, that mainly functions in lipoprotein-mediated lipid transport between organs via the plasma and interstitial fluids. APOE is a core component of plasma lipoproteins and is involved in their production, conversion and clearance. Apolipoproteins are amphipathic molecules that interact both with lipids of the lipoprotein particle core and the aqueous environment of the plasma. As such, APOE associates with chylomicrons, chylomicron remnants, very low density lipoproteins (VLDL) and intermediate density lipoproteins (IDL) but shows a preferential binding to high-density lipoproteins (HDL). It also binds a wide range of cellular receptors including the LDL receptor/LDLR and the very low-density lipoprotein receptor/VLDLR that mediate the cellular uptake of the APOE-containing lipoprotein particles. Finally, APOE also has a heparin-binding activity and binds heparan-sulfate proteoglycans on the surface of cells, a property that supports the capture and the receptor-mediated uptake of APOE-containing lipoproteins by cells. The protein is Apolipoprotein E (APOE) of Diceros bicornis (Black rhinoceros).